We begin with the raw amino-acid sequence, 379 residues long: Cytochrome b (379 aa).

The next 4 membrane-spanning stretches (helical) occupy residues 33–53 (FGSL…FLAM), 77–98 (WLIR…YLHI), 113–133 (WNIG…GYVL), and 178–198 (FFAF…LHLL). Positions 83 and 97 each coordinate heme b. His182 and His196 together coordinate heme b. His201 is an a ubiquinone binding site. Transmembrane regions (helical) follow at residues 226-246 (YKDL…ALFY), 288-308 (LGGV…PILH), 320-340 (ISQL…WIGG), and 347-367 (YIII…VLNP).

This sequence belongs to the cytochrome b family. As to quaternary structure, the cytochrome bc1 complex contains 3 respiratory subunits (MT-CYB, CYC1 and UQCRFS1), 2 core proteins (UQCRC1 and UQCRC2) and probably 6 low-molecular weight proteins. It depends on heme b as a cofactor.

The protein resides in the mitochondrion inner membrane. Component of the ubiquinol-cytochrome c reductase complex (complex III or cytochrome b-c1 complex) that is part of the mitochondrial respiratory chain. The b-c1 complex mediates electron transfer from ubiquinol to cytochrome c. Contributes to the generation of a proton gradient across the mitochondrial membrane that is then used for ATP synthesis. The protein is Cytochrome b (mt-cyb) of Anguilla mossambica (African longfin eel).